The chain runs to 1435 residues: Trafficking protein particle complex subunit 8 (1435 aa).

S273, S279, and S309 each carry phosphoserine. Positions 301–321 (QLEQSSDPSNSIDGPDHLRSA) are disordered. Over residues 302-312 (LEQSSDPSNSI) the composition is skewed to polar residues.

Belongs to the TRS85 family. As to quaternary structure, component of the multisubunit TRAPP (transport protein particle) complex, which includes TRAPPC2, TRAPPC2L, TRAPPC3, TRAPPC3L, TRAPPC4, TRAPPC5, TRAPPC8, TRAPPC9, TRAPPC10, TRAPPC11 and TRAPPC12. Interacts with TBC1D14. Interacts (via C-terminus) with TMEM131 (via C-terminus); the interaction is direct and is involved in collagen secretion.

Its subcellular location is the golgi apparatus. It localises to the cis-Golgi network. In terms of biological role, plays a role in endoplasmic reticulum to Golgi apparatus trafficking at a very early stage. Maintains together with TBC1D14 the cycling pool of ATG9 required for initiation of autophagy. Involved in collagen secretion. In Homo sapiens (Human), this protein is Trafficking protein particle complex subunit 8 (TRAPPC8).